Reading from the N-terminus, the 431-residue chain is Galanin-like G-protein coupled receptor npr-9 (431 aa).

The Extracellular portion of the chain corresponds to 1-34; sequence MEFENLTKEEMEQLQKIYDDTISFERKIGIIIPT. The N-linked (GlcNAc...) asparagine glycan is linked to Asn-5. The chain crosses the membrane as a helical span at residues 35–55; sequence IFAVIILVGLVGNALVVIVAF. Residues 56 to 66 are Cytoplasmic-facing; that stretch reads GRQMRNSTNTL. Residues 67–87 form a helical membrane-spanning segment; that stretch reads IIGLAISDLMFLLLCVPFTAV. At 88 to 101 the chain is on the extracellular side; the sequence is DYAAPTWIFPEWTC. An intrachain disulfide couples Cys-101 to Cys-182. A helical membrane pass occupies residues 102–124; sequence SMINFFQHTSAYCSVWTLTLMAL. The Cytoplasmic portion of the chain corresponds to 125–143; sequence DRYLAVVYPVESMTLRTPR. A helical membrane pass occupies residues 144–164; that stretch reads NTVIALCFIYIIIIASQIPVG. Topologically, residues 165 to 203 are extracellular; it reads RMHGIYVYDFIMEKRSTCAILTIATAEATPTMARTYFMT. Residues 204–224 traverse the membrane as a helical segment; sequence FNVFGYVLPLGISVVLYGLML. At 225–268 the chain is on the cytoplasmic side; the sequence is RKLWDMPRPGNSQSVGGRNLTNRDSGSSIRRRPEATAAKRKVTR. Residues 235-252 are compositionally biased toward polar residues; sequence NSQSVGGRNLTNRDSGSS. The disordered stretch occupies residues 235–257; the sequence is NSQSVGGRNLTNRDSGSSIRRRP. Residues 269–289 traverse the membrane as a helical segment; sequence LVLCVLITWALCWLPLNVCFF. Residues 290–298 are Extracellular-facing; the sequence is MSGLAYPEP. Residues 299–319 form a helical membrane-spanning segment; that stretch reads LVISHGVIMVIVQIASQVLAY. Topologically, residues 320–431 are cytoplasmic; that stretch reads TNSCLNPILY…RSKSTRSYNL (112 aa). Positions 393–414 are enriched in polar residues; that stretch reads SLLKDNSSSATSVQPLRTSIQA. The segment at 393–431 is disordered; it reads SLLKDNSSSATSVQPLRTSIQAKKTKNIGRSKSTRSYNL. Over residues 415 to 425 the composition is skewed to basic residues; that stretch reads KKTKNIGRSKS.

It belongs to the G-protein coupled receptor 1 family. Exclusively expressed in the AIB interneuron.

Its subcellular location is the cell membrane. Its function is as follows. Neuropeptide that controls movement such as roaming, foraging and backwards locomotion or 'reversals' in response to environmental cues such as food availability or volatile odorants such as octanol. Antagonizes AIB interneuron activity to control bacterial colonization and may negatively regulate the expression of immunity-related genes such as pqm-1 and dod-22 in response to infection by P.aeruginosa. This Caenorhabditis elegans protein is Galanin-like G-protein coupled receptor npr-9.